A 176-amino-acid polypeptide reads, in one-letter code: Adenylyl-sulfate kinase (176 aa).

Residue 12-19 (GLSGAGKS) participates in ATP binding. Residue Ser-86 is the Phosphoserine intermediate of the active site.

The protein belongs to the APS kinase family.

It carries out the reaction adenosine 5'-phosphosulfate + ATP = 3'-phosphoadenylyl sulfate + ADP + H(+). It participates in sulfur metabolism; hydrogen sulfide biosynthesis; sulfite from sulfate: step 2/3. Its function is as follows. Catalyzes the synthesis of activated sulfate. In Gloeothece citriformis (strain PCC 7424) (Cyanothece sp. (strain PCC 7424)), this protein is Adenylyl-sulfate kinase.